We begin with the raw amino-acid sequence, 694 residues long: TBC1 domain family member 14 (694 aa).

Phosphoserine is present on Ser92. Basic and acidic residues predominate over residues 272–289 (TAQKDSKKTQKEYEDKAG). Residues 272–305 (TAQKDSKKTQKEYEDKAGRPSRPPSPKQNVRKNL) are disordered. Ser296 bears the Phosphoserine mark. A Rab-GAP TBC domain is found at 402-612 (GIPPSVRGKV…RIWDVFCRDG (211 aa)).

Interacts with ULK1. May interact with RAB11A and RAB11B, but does not exhibit any GTPase-activating activity toward these proteins. Interacts with TRAPPC8.

It is found in the golgi apparatus. It localises to the cis-Golgi network. The protein resides in the trans-Golgi network. Its function is as follows. Plays a role in the regulation of starvation-induced autophagosome formation. Together with the TRAPPIII complex, regulates a constitutive trafficking step from peripheral recycling endosomes to the early Golgi, maintaining the cycling pool of ATG9 required for initiation of autophagy. The chain is TBC1 domain family member 14 (Tbc1d14) from Mus musculus (Mouse).